The chain runs to 547 residues: MNPSTAQARVVVDELVRGGVHDVVLCPGSRNAPLAFALADADRAGRLRLHVRIDERTAGFLAIGLAVADRAPVCVAMTSGTAVANLGPAVVEANYARVPLIVLSANRPYELLGTGANQTFEQLGYFGNQVRANISLGLAPELSSGSPGDMTSLNAQWRSATCRVVVAATGSRSANAGPVQFDIPLREPLVPTFDDDGSCPPGRPDGKPWTHTPPVTFDQPLDIDLTPDTVVIAGHGAGVHPNLADLPTVAEPTAPPAANPLHPMALRLLRPKQVIMLGRPTLHRPVSALLADPSVPVYALTTGPRWPDVSGNSQATGTRAVTSGTPDPAWLRRCKEVNDHAVAAVREQLAAHPLTTGLHVAAAVADAVRPGDQLVLGASNPVRDAALVGFTPHGVQVRSNRGVAGIDGTVSTAIGAALAHDRTGGRTIALMGDLTFVHDSSGLLIGPTEPTPRNLTIVVSNDNGGGIFELLEQGDPRFSDVSSRVFGTPHDVDVGALCRAYHVDNRQIEVGQLADALDEPHEGMRVLEVKADRSSLRALHASIKAAL.

This sequence belongs to the TPP enzyme family. MenD subfamily. As to quaternary structure, homodimer. It depends on Mg(2+) as a cofactor. Mn(2+) is required as a cofactor. Thiamine diphosphate serves as cofactor.

The catalysed reaction is isochorismate + 2-oxoglutarate + H(+) = 5-enolpyruvoyl-6-hydroxy-2-succinyl-cyclohex-3-ene-1-carboxylate + CO2. It participates in quinol/quinone metabolism; 1,4-dihydroxy-2-naphthoate biosynthesis; 1,4-dihydroxy-2-naphthoate from chorismate: step 2/7. The protein operates within quinol/quinone metabolism; menaquinone biosynthesis. Its function is as follows. Catalyzes the thiamine diphosphate-dependent decarboxylation of 2-oxoglutarate and the subsequent addition of the resulting succinic semialdehyde-thiamine pyrophosphate anion to isochorismate to yield 2-succinyl-5-enolpyruvyl-6-hydroxy-3-cyclohexene-1-carboxylate (SEPHCHC). The protein is 2-succinyl-5-enolpyruvyl-6-hydroxy-3-cyclohexene-1-carboxylate synthase of Mycobacterium sp. (strain KMS).